The sequence spans 1018 residues: Probable inorganic carbon transporter subunit DabA 2 (1018 aa).

Residues Cys489, Asp491, His674, and Cys689 each coordinate Zn(2+).

The protein belongs to the inorganic carbon transporter (TC 9.A.2) DabA family. In terms of assembly, forms a complex with DabB. Requires Zn(2+) as cofactor.

The protein resides in the cell inner membrane. In terms of biological role, part of an energy-coupled inorganic carbon pump. The polypeptide is Probable inorganic carbon transporter subunit DabA 2 (Sorangium cellulosum (strain So ce56) (Polyangium cellulosum (strain So ce56))).